Consider the following 210-residue polypeptide: Regulator of G-protein signaling 17 (210 aa).

The disordered stretch occupies residues 1 to 21 (MRKRQQSQNEGTSAVSQAPGN). Positions 84–200 (NFDKMMKTPA…LNSQIYKSLV (117 aa)) constitute an RGS domain.

Interacts with GNAI1 and GNAQ. Interacts with GNAZ and GNAI2. Forms a complex with mu-opioid receptors and G(alpha)z/i2 subunits, including GNAZ and GNAI2; the formation of this complex results in mu-opioid receptor desensitization. Post-translationally, N- and O-glycosylated in synapsomal membranes. Serine phosphorylated in synapsomal membranes. In terms of processing, sumoylated with SUMO1 and SUM02 in synaptosomes. The sumoylated forms act as a scaffold for sequestering mu-opioid receptor-activated G(alpha) subunits.

The protein localises to the membrane. It is found in the synapse. Its subcellular location is the synaptosome. The protein resides in the nucleus. It localises to the cytoplasm. Its function is as follows. Regulates G protein-coupled receptor signaling cascades, including signaling via muscarinic acetylcholine receptor CHRM2 and dopamine receptor DRD2. Inhibits signal transduction by increasing the GTPase activity of G protein alpha subunits, thereby driving them into their inactive GDP-bound form. Binds selectively to GNAZ and GNAI2 subunits, accelerates their GTPase activity and regulates their signaling activities. Negatively regulates mu-opioid receptor-mediated activation of the G-proteins. The protein is Regulator of G-protein signaling 17 (RGS17) of Gallus gallus (Chicken).